We begin with the raw amino-acid sequence, 503 residues long: Dihydropyrimidinase (503 aa).

Positions 66, 68, and 158 each coordinate Zn(2+). At Lys-158 the chain carries N6-carboxylysine. Position 163 (Tyr-163) interacts with substrate. Residues His-191, His-247, and Asp-325 each contribute to the Zn(2+) site. Residue Asn-346 coordinates substrate.

Belongs to the metallo-dependent hydrolases superfamily. Hydantoinase/dihydropyrimidinase family. As to quaternary structure, homotetramer. The cofactor is Zn(2+). In terms of processing, carboxylation allows a single lysine to coordinate two zinc ions.

It catalyses the reaction 5,6-dihydrouracil + H2O = 3-(carbamoylamino)propanoate + H(+). Functionally, catalyzes the second step of the reductive pyrimidine degradation, the reversible hydrolytic ring opening of dihydropyrimidines. Can catalyze the ring opening of 5,6-dihydrouracil to N-carbamyl-alanine and of 5,6-dihydrothymine to N-carbamyl-amino isobutyrate. The sequence is that of Dihydropyrimidinase (pyd2) from Dictyostelium discoideum (Social amoeba).